The chain runs to 2344 residues: Peroxide stress-activated histidine kinase mak3 (2344 aa).

The region spanning 1–295 (MYSQHELRNK…GIVNDLEACL (295 aa)) is the Protein kinase domain. 3 positions are modified to phosphoserine: Ser12, Ser16, and Ser17. Residues 486–503 (SGNTRKTSLLGSNHSSYS) show a composition bias toward polar residues. Residues 486–506 (SGNTRKTSLLGSNHSSYSDKL) are disordered. TPR repeat units follow at residues 829-862 (CHYL…IPHE) and 1340-1373 (AFAF…YAAL). Residues 1730 to 1781 (FELEIRIKRKDGVYRWNLTRCTPTTNEKNRTSFLCATIDIDDQKKARATALE) enclose the PAC domain. Residues 1792–2018 (NISHELRTPF…TFKICYDLKI (227 aa)) enclose the Histidine kinase domain. His1795 is modified (phosphohistidine; by autocatalysis). The Response regulatory domain occupies 2211–2333 (KILIAEDNPI…TLIKMLLQYL (123 aa)). Asp2263 carries the post-translational modification 4-aspartylphosphate.

Its subcellular location is the cytoplasm. The catalysed reaction is ATP + protein L-histidine = ADP + protein N-phospho-L-histidine.. Its function is as follows. Involved in the control of the SAPK-dependent transcriptional response to peroxide stress. Regulates sty1 activity. This Schizosaccharomyces pombe (strain 972 / ATCC 24843) (Fission yeast) protein is Peroxide stress-activated histidine kinase mak3 (mak3).